The primary structure comprises 508 residues: Glycerol kinase (508 aa).

An ADP-binding site is contributed by T15. ATP contacts are provided by T15, S16, and S17. Sn-glycerol 3-phosphate is bound at residue T15. R19 provides a ligand contact to ADP. Residues R85, E86, Y138, and D251 each coordinate sn-glycerol 3-phosphate. The glycerol site is built by R85, E86, Y138, D251, and Q252. 3 residues coordinate ADP: T273, G317, and G419. 3 residues coordinate ATP: T273, G317, and G419.

Belongs to the FGGY kinase family.

It catalyses the reaction glycerol + ATP = sn-glycerol 3-phosphate + ADP + H(+). Its pathway is polyol metabolism; glycerol degradation via glycerol kinase pathway; sn-glycerol 3-phosphate from glycerol: step 1/1. Its activity is regulated as follows. Inhibited by fructose 1,6-bisphosphate (FBP). Its function is as follows. Key enzyme in the regulation of glycerol uptake and metabolism. Catalyzes the phosphorylation of glycerol to yield sn-glycerol 3-phosphate. This Mycoplasma genitalium (strain ATCC 33530 / DSM 19775 / NCTC 10195 / G37) (Mycoplasmoides genitalium) protein is Glycerol kinase.